Consider the following 311-residue polypeptide: tRNA dimethylallyltransferase (311 aa).

Residue glycine 12 to threonine 19 coordinates ATP. Threonine 14–threonine 19 serves as a coordination point for substrate. 2 interaction with substrate tRNA regions span residues aspartate 37–methionine 40 and glutamine 161–arginine 165.

The protein belongs to the IPP transferase family. In terms of assembly, monomer. The cofactor is Mg(2+).

The catalysed reaction is adenosine(37) in tRNA + dimethylallyl diphosphate = N(6)-dimethylallyladenosine(37) in tRNA + diphosphate. Its function is as follows. Catalyzes the transfer of a dimethylallyl group onto the adenine at position 37 in tRNAs that read codons beginning with uridine, leading to the formation of N6-(dimethylallyl)adenosine (i(6)A). The sequence is that of tRNA dimethylallyltransferase from Coxiella burnetii (strain RSA 331 / Henzerling II).